A 414-amino-acid polypeptide reads, in one-letter code: Lipoyl synthase, mitochondrial (414 aa).

Residues 1 to 18 (MYRRSVGVLFVGRNTRWI) constitute a mitochondrion transit peptide. The segment covering 51–67 (GNSTEVENATSQLTGTS) has biased composition (polar residues). Residues 51-75 (GNSTEVENATSQLTGTSGKRRKGNR) form a disordered region. Residues C150, C155, C161, C181, C185, C188, and S396 each coordinate [4Fe-4S] cluster. The Radical SAM core domain maps to 164-385 (GKDKSKATAT…KERALEMGFL (222 aa)).

It belongs to the radical SAM superfamily. Lipoyl synthase family. Requires [4Fe-4S] cluster as cofactor.

It localises to the mitochondrion. The catalysed reaction is [[Fe-S] cluster scaffold protein carrying a second [4Fe-4S](2+) cluster] + N(6)-octanoyl-L-lysyl-[protein] + 2 oxidized [2Fe-2S]-[ferredoxin] + 2 S-adenosyl-L-methionine + 4 H(+) = [[Fe-S] cluster scaffold protein] + N(6)-[(R)-dihydrolipoyl]-L-lysyl-[protein] + 4 Fe(3+) + 2 hydrogen sulfide + 2 5'-deoxyadenosine + 2 L-methionine + 2 reduced [2Fe-2S]-[ferredoxin]. Its pathway is protein modification; protein lipoylation via endogenous pathway; protein N(6)-(lipoyl)lysine from octanoyl-[acyl-carrier-protein]: step 2/2. Its function is as follows. Catalyzes the radical-mediated insertion of two sulfur atoms into the C-6 and C-8 positions of the octanoyl moiety bound to the lipoyl domains of lipoate-dependent enzymes, thereby converting the octanoylated domains into lipoylated derivatives. In Saccharomyces cerevisiae (strain RM11-1a) (Baker's yeast), this protein is Lipoyl synthase, mitochondrial.